The following is a 375-amino-acid chain: OVARIAN TUMOR DOMAIN-containing deubiquitinating enzyme 7 (375 aa).

Over residues 1 to 18 the composition is skewed to basic residues; the sequence is MAKTKQQKSKPKKQPHQK. A disordered region spans residues 1–23; sequence MAKTKQQKSKPKKQPHQKQGKDC. Residues 37–161 form the OTU domain; the sequence is LKIIQVTADG…GEHYNSVRSK (125 aa). Residue Asp-45 is part of the active site. The Nucleophile role is filled by Cys-48. His-154 is a catalytic residue. The UBA-like domain maps to 202-250; that stretch reads HVNAGAIKVVMSGSCCDNTEKAEQVLLQVNGDVDAAIEFLIADQGMESL. Polar residues-rich tracts occupy residues 251–264 and 290–305; these read TEND…SDTI and ASGN…CTTQ. The interval 251 to 306 is disordered; that stretch reads TENDTETASASDTINPKHASDSPMENTEQAREELIEEESASGNNSETVQAKCTTQT. Positions 308–315 match the Nuclear localization signal motif; the sequence is DKKIPRNK.

Belongs to the peptidase C85 family.

Its subcellular location is the nucleus. It catalyses the reaction Thiol-dependent hydrolysis of ester, thioester, amide, peptide and isopeptide bonds formed by the C-terminal Gly of ubiquitin (a 76-residue protein attached to proteins as an intracellular targeting signal).. Functionally, hydrolase that can remove conjugated ubiquitin from proteins in vitro and may therefore play an important regulatory role at the level of protein turnover by preventing degradation. Cysteine protease with a preference for 'Lys-63' over 'Lys-48' over 'Met-1' -linked ubiquitin (UB) tetramers as substrates. Also cleaves RUB-GST fusion. This chain is OVARIAN TUMOR DOMAIN-containing deubiquitinating enzyme 7, found in Arabidopsis thaliana (Mouse-ear cress).